Here is an 83-residue protein sequence, read N- to C-terminus: Exodeoxyribonuclease 7 small subunit (83 aa).

The protein belongs to the XseB family. In terms of assembly, heterooligomer composed of large and small subunits.

The protein resides in the cytoplasm. The enzyme catalyses Exonucleolytic cleavage in either 5'- to 3'- or 3'- to 5'-direction to yield nucleoside 5'-phosphates.. Bidirectionally degrades single-stranded DNA into large acid-insoluble oligonucleotides, which are then degraded further into small acid-soluble oligonucleotides. In Aeromonas salmonicida (strain A449), this protein is Exodeoxyribonuclease 7 small subunit.